Consider the following 719-residue polypeptide: Solute carrier organic anion transporter family member 6A1 (719 aa).

The interval 1-46 (MFVGVARHSGSQDEVSRGVEPLEAARAQPAKDRRAKGTPKSSKPGK) is disordered. Residues 1–106 (MFVGVARHSG…TCCECCNNIR (106 aa)) are Cytoplasmic-facing. Basic residues predominate over residues 33–46 (RRAKGTPKSSKPGK). The helical transmembrane segment at 107-126 (CFMIFYCILLICQGVVFGLI) threads the bilayer. Residues 127 to 145 (DVSIGDFQKEYQLKTIEKL) are Extracellular-facing. Residues 146-166 (ALEKSYDISSGLVAIFIAFYG) form a helical membrane-spanning segment. The Cytoplasmic segment spans residues 167–171 (DRKKV). The chain crosses the membrane as a helical span at residues 172–196 (IWFVASSFLIGLGSLLCAFPSINEE). At 197 to 223 (NKQSKVGIEDICEEIKVVSGCQSSGIS) the chain is on the extracellular side. Residues 224 to 254 (FQSKYLSFFILGQTVQGIAGMPLYILGITFI) traverse the membrane as a helical segment. Topologically, residues 255–274 (DENVATHSAGIYLGIAECTS) are cytoplasmic. A helical membrane pass occupies residues 275–295 (MIGYALGYVLGAPLVKVPENT). Topologically, residues 296–311 (TSATNTTVNNGSPEWL) are extracellular. Asn-300 carries an N-linked (GlcNAc...) asparagine glycan. Residues 312–336 (WTWWINFLFAAVVAWCTLIPLSCFP) form a helical membrane-spanning segment. Residues 337–378 (NNMPGSTRIKARKRKQLHFFDSRLKDLKLGTNIKDLCAALWI) are Cytoplasmic-facing. Residues 379-400 (LMKNPVLICLALSKATEYLVII) form a helical membrane-spanning segment. At 401–420 (GASEFLPIYLENQFILTPTV) the chain is on the extracellular side. The chain crosses the membrane as a helical span at residues 421 to 444 (ATTLAGLVLIPGGALGQLLGGVIV). Residues 445-448 (STLE) lie on the Cytoplasmic side of the membrane. The chain crosses the membrane as a helical span at residues 449 to 472 (MSCKALMRFIMVTSVISLILLVFI). Residues 473 to 581 (IFVRCNPVQF…DAKCYKLPLF (109 aa)) are Extracellular-facing. The Kazal-like domain maps to 496–551 (GNLTAPCNEKCRCSSSIYSSICGRDDIEYFSPCFAGCTYSKAQNQKKMYYNCSCIK). Asn-497 carries N-linked (GlcNAc...) asparagine glycosylation. 3 disulfide bridges follow: Cys-502-Cys-532, Cys-508-Cys-528, and Cys-517-Cys-549. Asn-546 carries an N-linked (GlcNAc...) asparagine glycan. Residues 582 to 604 (IAFIFSTLIFSGFSGVPIVLAMT) form a helical membrane-spanning segment. The Cytoplasmic segment spans residues 605-613 (RVVPDKLRS). The chain crosses the membrane as a helical span at residues 614–639 (LALGVSYVILRIFGTIPGPSIFKMSG). The Extracellular segment spans residues 640–673 (ETSCILRDVNKCGHTGRCWIYNKTKMAFLLVGIC). Residue Asn-661 is glycosylated (N-linked (GlcNAc...) asparagine). Residues 674-691 (FLCKLCTIIFTTIAFFIY) form a helical membrane-spanning segment. Over 692–719 (KRRLNENTDFPDVTVKNPKVKKKEETDL) the chain is Cytoplasmic.

The protein belongs to the organo anion transporter (TC 2.A.60) family. Strongly expressed in testis. Weakly expressed in spleen, brain, fetal brain and placenta. Detected in lung tumors.

Its subcellular location is the cell membrane. The polypeptide is Solute carrier organic anion transporter family member 6A1 (SLCO6A1) (Homo sapiens (Human)).